Here is a 281-residue protein sequence, read N- to C-terminus: Probable catechol O-methyltransferase 2 (281 aa).

S-adenosyl-L-methionine contacts are provided by Ile-78, Glu-100, Ser-108, Glu-127, Val-128, Ala-156, and Asp-183. Position 183 (Asp-183) interacts with Mg(2+). Lys-186 serves as a coordination point for substrate. Residues Asp-211 and Asn-212 each coordinate Mg(2+). Position 212 (Asn-212) interacts with substrate.

Belongs to the class I-like SAM-binding methyltransferase superfamily. Cation-dependent O-methyltransferase family. It depends on Mg(2+) as a cofactor.

Its subcellular location is the vacuole. The catalysed reaction is a catechol + S-adenosyl-L-methionine = a guaiacol + S-adenosyl-L-homocysteine + H(+). In Schizosaccharomyces pombe (strain 972 / ATCC 24843) (Fission yeast), this protein is Probable catechol O-methyltransferase 2.